The primary structure comprises 396 residues: Putative nickel insertion protein (396 aa).

Belongs to the LarC family.

This chain is Putative nickel insertion protein, found in Methanosarcina barkeri (strain Fusaro / DSM 804).